A 216-amino-acid polypeptide reads, in one-letter code: ATP phosphoribosyltransferase (216 aa).

The protein belongs to the ATP phosphoribosyltransferase family. Short subfamily. In terms of assembly, heteromultimer composed of HisG and HisZ subunits.

The protein localises to the cytoplasm. The enzyme catalyses 1-(5-phospho-beta-D-ribosyl)-ATP + diphosphate = 5-phospho-alpha-D-ribose 1-diphosphate + ATP. Its pathway is amino-acid biosynthesis; L-histidine biosynthesis; L-histidine from 5-phospho-alpha-D-ribose 1-diphosphate: step 1/9. Its function is as follows. Catalyzes the condensation of ATP and 5-phosphoribose 1-diphosphate to form N'-(5'-phosphoribosyl)-ATP (PR-ATP). Has a crucial role in the pathway because the rate of histidine biosynthesis seems to be controlled primarily by regulation of HisG enzymatic activity. This chain is ATP phosphoribosyltransferase, found in Nitrosomonas eutropha (strain DSM 101675 / C91 / Nm57).